The chain runs to 122 residues: MPGNNHNDRPVALIMSRLSRDPRDCIHHTVDTRGMTPGKIIHQVIPPHPTQMRHTNRPSPPVILNLQILSEGGHVCARDVDTADPVPRAGPERTIQWGTDRDATEELASPAPEEIYEDNDSW.

Positions 80-122 (VDTADPVPRAGPERTIQWGTDRDATEELASPAPEEIYEDNDSW) are disordered.

It belongs to the novirhabdovirus NV protein family.

Plays an essential role for the viral pathogenicity. The sequence is that of Non-virion protein (NV) from Gobiosoma bosc (Naked goby).